The chain runs to 545 residues: CTP synthase (545 aa).

Residues Met1 to Leu266 are amidoligase domain. Ser14 is a CTP binding site. Ser14 is a UTP binding site. ATP contacts are provided by residues Ser15–Ile20 and Asp72. 2 residues coordinate Mg(2+): Asp72 and Glu140. Residues Asp147–Glu149, Lys187–Gln192, and Lys223 each bind CTP. UTP is bound by residues Lys187–Gln192 and Lys223. An ATP-binding site is contributed by Lys239–Val241. A Glutamine amidotransferase type-1 domain is found at Thr291 to Arg542. Residue Gly352 participates in L-glutamine binding. Cys379 acts as the Nucleophile; for glutamine hydrolysis in catalysis. Residues Leu380–Gln383, Glu403, and Arg470 each bind L-glutamine. Residues His515 and Glu517 contribute to the active site.

Belongs to the CTP synthase family. As to quaternary structure, homotetramer.

It carries out the reaction UTP + L-glutamine + ATP + H2O = CTP + L-glutamate + ADP + phosphate + 2 H(+). It catalyses the reaction L-glutamine + H2O = L-glutamate + NH4(+). The catalysed reaction is UTP + NH4(+) + ATP = CTP + ADP + phosphate + 2 H(+). Its pathway is pyrimidine metabolism; CTP biosynthesis via de novo pathway; CTP from UDP: step 2/2. Its activity is regulated as follows. Allosterically activated by GTP, when glutamine is the substrate; GTP has no effect on the reaction when ammonia is the substrate. The allosteric effector GTP functions by stabilizing the protein conformation that binds the tetrahedral intermediate(s) formed during glutamine hydrolysis. Inhibited by the product CTP, via allosteric rather than competitive inhibition. Its function is as follows. Catalyzes the ATP-dependent amination of UTP to CTP with either L-glutamine or ammonia as the source of nitrogen. Regulates intracellular CTP levels through interactions with the four ribonucleotide triphosphates. In Sodalis glossinidius (strain morsitans), this protein is CTP synthase.